The sequence spans 376 residues: MKIKKIKLLKALALTGAFGIVATVPVIVSSCSSTDNNGGTGDNNTGGGGSGTDQQQGTTYTPAIKSDVTLSGALSKIYDTTNTGDSRKNTNTLIAEDIKANPENYFTNGEDLKKVEGWSVTVDGSFDSNSVWTGDAYSKWSAVADTHKGVYKSTSKQLNINSLKDLKSQLDTSAKIKAICDESNLVFSTADADSYKIQNELGFTGGDLLHINVTATQAGKTLNMDLGIPVSDLNLKITDLKVSVTASNNSTGNNVAAVSDLTTNFTYNIGIKEEVTAPTEKPNLAKTDKGEVMKVLKALGYTQTGDETKLDNDKVSNSLGLYNCEFTAVSATPVEGSEDKFTIKLKAKPLTDYVWEDGTNTEKEISFEATFTMTGN.

A signal peptide spans Met1 to Ser30. Residue Cys31 is the site of N-palmitoyl cysteine attachment. The S-diacylglycerol cysteine moiety is linked to residue Cys31. The tract at residues Ser33–Thr59 is disordered. The segment covering Gly38–Gly51 has biased composition (gly residues).

Belongs to the p35 lipoprotein family.

The protein resides in the cell membrane. This is Lipoprotein p33 from Malacoplasma penetrans (strain HF-2) (Mycoplasma penetrans).